A 273-amino-acid polypeptide reads, in one-letter code: Light-independent protochlorophyllide reductase iron-sulfur ATP-binding protein (273 aa).

ATP-binding positions include 12-17 and Lys-41; that span reads GIGKST. Ser-16 is a binding site for Mg(2+). [4Fe-4S] cluster-binding residues include Cys-97 and Cys-131. Position 182–183 (182–183) interacts with ATP; it reads NR.

It belongs to the NifH/BchL/ChlL family. As to quaternary structure, homodimer. Protochlorophyllide reductase is composed of three subunits; BchL, BchN and BchB. It depends on [4Fe-4S] cluster as a cofactor.

The catalysed reaction is chlorophyllide a + oxidized 2[4Fe-4S]-[ferredoxin] + 2 ADP + 2 phosphate = protochlorophyllide a + reduced 2[4Fe-4S]-[ferredoxin] + 2 ATP + 2 H2O. It functions in the pathway porphyrin-containing compound metabolism; bacteriochlorophyll biosynthesis (light-independent). Its function is as follows. Component of the dark-operative protochlorophyllide reductase (DPOR) that uses Mg-ATP and reduced ferredoxin to reduce ring D of protochlorophyllide (Pchlide) to form chlorophyllide a (Chlide). This reaction is light-independent. The L component serves as a unique electron donor to the NB-component of the complex, and binds Mg-ATP. In Roseiflexus castenholzii (strain DSM 13941 / HLO8), this protein is Light-independent protochlorophyllide reductase iron-sulfur ATP-binding protein.